The sequence spans 382 residues: PqqA peptide cyclase (382 aa).

Residues 8 to 223 (VKPPLWLLAE…VHRYREKMAA (216 aa)) form the Radical SAM core domain. Residues Cys22, Cys26, and Cys29 each contribute to the [4Fe-4S] cluster site.

Belongs to the radical SAM superfamily. PqqE family. Interacts with PqqD. The interaction is necessary for activity of PqqE. [4Fe-4S] cluster serves as cofactor.

It catalyses the reaction [PQQ precursor protein] + S-adenosyl-L-methionine = E-Y cross-linked-[PQQ precursor protein] + 5'-deoxyadenosine + L-methionine + H(+). Its pathway is cofactor biosynthesis; pyrroloquinoline quinone biosynthesis. Functionally, catalyzes the cross-linking of a glutamate residue and a tyrosine residue in the PqqA protein as part of the biosynthesis of pyrroloquinoline quinone (PQQ). This chain is PqqA peptide cyclase, found in Erwinia tasmaniensis (strain DSM 17950 / CFBP 7177 / CIP 109463 / NCPPB 4357 / Et1/99).